The following is a 97-amino-acid chain: MKIRPLHDRVIVKRKEVESKSAGGIVLTGSAAGKSTRGEVLAVGHGRVLENGGVKALDVRIGDTVIFNDGYGVKVEKIDNEEVLIMSESDILAIVEK.

It belongs to the GroES chaperonin family. In terms of assembly, heptamer of 7 subunits arranged in a ring. Interacts with the chaperonin GroEL.

It localises to the cytoplasm. Functionally, together with the chaperonin GroEL, plays an essential role in assisting protein folding. The GroEL-GroES system forms a nano-cage that allows encapsulation of the non-native substrate proteins and provides a physical environment optimized to promote and accelerate protein folding. GroES binds to the apical surface of the GroEL ring, thereby capping the opening of the GroEL channel. This Blochmanniella pennsylvanica (strain BPEN) protein is Co-chaperonin GroES.